The primary structure comprises 416 residues: Vacuole membrane protein KMS1 (416 aa).

Position 2 is an N-acetylglycine (Gly-2). Residues 2–60 (GSAGVASSSSDVAISALREKHEKEVENLTLTTQPLNTLKLFVEATIQYIKRSISYLLAH) are Cytoplasmic-facing. A helical transmembrane segment spans residues 61-81 (GGWFILITTLLVVSGGLLVTV). Residues 82–101 (DGPHGKHVEEVLEYVRYGLW) are Lumenal-facing. The chain crosses the membrane as a helical span at residues 102 to 124 (WIALGVASSIGLGSGLHTFVLYL). Topologically, residues 125–257 (GPHIALFTLK…WLLTHSQHLN (133 aa)) are cytoplasmic. Residues 258 to 278 (FFTVLVLASVPNPLFDLAGIM) form a helical membrane-spanning segment. Residues 279-289 (CGQFGIPFWEF) lie on the Lumenal side of the membrane. Residues 290–312 (FLATLIGKAIIKTHIQTIFIICV) traverse the membrane as a helical segment. Topologically, residues 313–323 (CNNQLLDWMEN) are cytoplasmic. Residues 324-344 (ELIWILSHVPGLASMLPGLTA) form a helical membrane-spanning segment. Residues 345–372 (KLHAMKEKYIDAPSPVPSHIKVKKWDFS) lie on the Lumenal side of the membrane. The chain crosses the membrane as a helical span at residues 373–393 (FASIWNGIVWLMLLNFFVKIV). Over 394–416 (TATAQRHLKKKQEKEMATLTHSD) the chain is Cytoplasmic.

This sequence belongs to the VMP1 family.

Its subcellular location is the endoplasmic reticulum membrane. Functionally, involved in the early secretory pathway. Required for the correct export of secretory products from the endoplasmic reticulum (ER) and involved in the maintenance of ER integrity. In Arabidopsis thaliana (Mouse-ear cress), this protein is Vacuole membrane protein KMS1.